Here is a 268-residue protein sequence, read N- to C-terminus: Myeloid leukemia factor 1 (268 aa).

Phosphoserine occurs at positions 6, 8, and 32. The segment at 50 to 125 is interaction with COPS3; the sequence is RVHNRRGHND…IGDEPPKVFQ (76 aa). Positions 208–268 are disordered; that stretch reads PGRHNLENTR…KGSSVKSNKK (61 aa). Basic and acidic residues-rich tracts occupy residues 226 to 237 and 244 to 257; these read PGSRELKRREKP and EHGRRSDVLGDKLH.

The protein belongs to the MLF family. Interacts with CENPU. Also interacts with NRBP1/MADM, YWHAZ/14-3-3-zeta and HNRPUL2/MANP. NRBP1 recruits a serine kinase which phosphorylates both itself and MLF1. Phosphorylated MLF1 then binds to YWHAZ and is retained in the cytoplasm. Retained in the nucleus by binding to HNRPUL2. Binds to COPS3/CSN3 which is required for suppression of COP1 and activation of p53. Post-translationally, phosphorylation is required for binding to YWHAZ.

The protein resides in the cytoplasm. Its subcellular location is the nucleus. It is found in the cell projection. The protein localises to the cilium. It localises to the cytoskeleton. The protein resides in the cilium basal body. Its function is as follows. Involved in lineage commitment of primary hemopoietic progenitors by restricting erythroid formation and enhancing myeloid formation. Interferes with erythropoietin-induced erythroid terminal differentiation by preventing cells from exiting the cell cycle through suppression of CDKN1B/p27Kip1 levels. Suppresses COP1 activity via CSN3 which activates p53 and induces cell cycle arrest. Binds DNA and affects the expression of a number of genes so may function as a transcription factor in the nucleus. This Pongo abelii (Sumatran orangutan) protein is Myeloid leukemia factor 1 (MLF1).